An 85-amino-acid chain; its full sequence is Small ribosomal subunit protein bS18 (85 aa).

This sequence belongs to the bacterial ribosomal protein bS18 family. Part of the 30S ribosomal subunit. Forms a tight heterodimer with protein bS6.

Its function is as follows. Binds as a heterodimer with protein bS6 to the central domain of the 16S rRNA, where it helps stabilize the platform of the 30S subunit. This chain is Small ribosomal subunit protein bS18, found in Helicobacter pylori (strain P12).